The chain runs to 697 residues: MHAIAPRLLLLFVLSGLPGTRGGSGVPGPINPPNNDVVFPGGSPVAQYCYAYPRLDDPGPLGSADAGRQDLPRRVVRHEPLGRSFLTGGLVLLAPPVRGFGAPNATYAAHVTYYRLTRACRQPILLRQYGGCRGGEPPSPKTCGSYTYTYQGGGPPTRYALVNASLLVPIWDRAAETFEYQIELGGELHVGLLWVEVGGEGPGPTAPPQAARAEGGPCVPPVPAGRPWRSVPPVWYSAPNPGFRGLRFRERCLPPQTPAAPSDLPRVAFAPQSLLVGITGRTFIRMARPTEDGVLPPHWAPGALDDGPYAPFPPRPRFRRALRTDPEGVDPDVRAPRTGRRLMALTEDASSDSPTSAPEKTPLPVSATAMAPSVDPSAEPTAPATTTPPDEMATQAATVAVTPEETAVASPPATASVESSPPPAAAATPGAGHTNTSSASAAKTPPTTPAPTTPPPTSTHATPRPTTPGPQTTPPGPATPGPVGASAAPTADSPLTALPPATAPGPSAANVSVAATTATPGTRGTARTPPTDPKTHPHGPADAPPGSPAPPPPEHRGGPEEFEGAGDGEPPEDDDSATGLAFRTPNPNKPPPARPGPIRPTLPPGILGPLAPNTPRPPAQAPAKDMPSGPTPQHIPLFWFLTASPALDILFIISTTIHTAAFVCLVALAAQLWRGRAGRRRYAHPSVRYVCLPPERD.

Positions 1-22 (MHAIAPRLLLLFVLSGLPGTRG) are cleaved as a signal peptide. Residues 23–648 (GSGVPGPINP…WFLTASPALD (626 aa)) lie on the Virion surface side of the membrane. N-linked (GlcNAc...) asparagine; by host glycans are attached at residues asparagine 104 and asparagine 163. Disordered regions lie at residues 298-389 (HWAP…TTPP) and 402-630 (TPEE…PSGP). Positions 322-335 (LRTDPEGVDPDVRA) are enriched in basic and acidic residues. 2 stretches are compositionally biased toward low complexity: residues 375 to 389 (DPSA…TTPP) and 402 to 445 (TPEE…AKTP). Asparagine 435 carries an N-linked (GlcNAc...) asparagine; by host glycan. Pro residues-rich tracts occupy residues 446-457 (PTTPAPTTPPPT) and 465-480 (PTTP…PATP). Residues 481-529 (GPVGASAAPTADSPLTALPPATAPGPSAANVSVAATTATPGTRGTARTP) show a composition bias toward low complexity. N-linked (GlcNAc...) asparagine; by host glycosylation occurs at asparagine 510. Over residues 542 to 552 (DAPPGSPAPPP) the composition is skewed to pro residues. Residues 560 to 576 (EEFEGAGDGEPPEDDDS) are compositionally biased toward acidic residues. A compositionally biased stretch (pro residues) spans 587 to 603 (PNKPPPARPGPIRPTLP). Residues 649 to 669 (ILFIISTTIHTAAFVCLVALA) traverse the membrane as a helical segment. Over 670–697 (AQLWRGRAGRRRYAHPSVRYVCLPPERD) the chain is Intravirion.

Belongs to the alphaherpesvirinae glycoprotein G family.

The protein resides in the virion membrane. Functionally, chemokine-binding protein that inhibits neutrophils' chemotaxis. The chain is Envelope glycoprotein G (gG) from Homo sapiens (Human).